The chain runs to 160 residues: Calsequestrin-2 (160 aa).

This sequence belongs to the calsequestrin family. In terms of assembly, monomer, homodimer and homooligomer. Mostly monomeric in the absence of calcium. Forms higher oligomers in a calcium-dependent manner. Dimers associate to form tetramers, that then form linear homomer chains. Interacts with ASPH and TRDN. In terms of processing, phosphorylation in the C-terminus, probably by CK2, moderately increases calcium buffering capacity. Post-translationally, N-glycosylated.

It localises to the sarcoplasmic reticulum lumen. Calsequestrin is a high-capacity, moderate affinity, calcium-binding protein and thus acts as an internal calcium store in muscle. Calcium ions are bound by clusters of acidic residues at the protein surface, especially at the interface between subunits. Can bind around 60 Ca(2+) ions. Regulates the release of lumenal Ca(2+) via the calcium release channel RYR2; this plays an important role in triggering muscle contraction. Plays a role in excitation-contraction coupling in the heart and in regulating the rate of heart beats. This chain is Calsequestrin-2 (CASQ2), found in Sus scrofa (Pig).